The following is a 455-amino-acid chain: Tubby-like F-box protein 1 (455 aa).

The F-box domain occupies 54-112; that stretch reads ETPWANLPPELLRDVIKRLEESESVWPARRHVVACASVCRSWRDMCKEIVQSPELSGKI. The tract at residues 386 to 414 is disordered; that stretch reads QPQPQPQPQPQPQPLTQPQPSGQTDGPDK. Positions 388–402 are enriched in pro residues; sequence QPQPQPQPQPQPLTQ.

Belongs to the TUB family. Ubiquitous.

This is Tubby-like F-box protein 1 from Arabidopsis thaliana (Mouse-ear cress).